The primary structure comprises 2507 residues: Putative neurobeachin homolog (2507 aa).

3 disordered regions span residues 1–109, 1307–1377, and 1629–1649; these read MEIS…PPLP, PSSP…DGGR, and SRHE…EISE. Over residues 24 to 37 the composition is skewed to acidic residues; sequence PVEEGEEVNDEESN. A compositionally biased stretch (polar residues) spans 1317–1340; it reads TTQKQENSENVNSETSPENGSNGK. A compositionally biased stretch (acidic residues) spans 1360–1372; that stretch reads DGEEEENGEEGQG. One can recognise a BEACH-type PH domain in the interval 1690–1798; that stretch reads PSSQSACFST…AVKKVVYQLP (109 aa). A BEACH domain is found at 1817–2106; the sequence is MTPRQLFKHS…QLLTEAHPPR (290 aa). 4 WD repeats span residues 2265-2308, 2326-2365, 2405-2444, and 2447-2486; these read GHGD…GFIA, GHEA…LRRI, LVDD…KLYT, and PLNS…WHYE.

The protein belongs to the WD repeat neurobeachin family. In terms of assembly, interacts with RII subunit of PKA. As to expression, expressed in vulval precursor cells and rectal epithelia in L2 and L3 larvae. In L4 larvae, expression is seen in intestinal epithelial cells.

It localises to the cytoplasm. It is found in the membrane. The protein localises to the nucleus. Its function is as follows. Binds to type II regulatory subunits of protein kinase A and anchors/targets them to the membrane. May anchor the kinase to cytoskeletal and/or organelle-associated proteins. Regulates endosomal traffic in polarized epithelial cells such as the vulval precursor cells and intestinal cells. Thought to act as a negative regulator of lin-12 activity in vulval precursor cells. May have a role in the internalization process from basolateral surface of polarized epithelial cells. The polypeptide is Putative neurobeachin homolog (sel-2) (Caenorhabditis elegans).